A 286-amino-acid chain; its full sequence is Protease HtpX homolog (286 aa).

Helical transmembrane passes span 7 to 27 (TFMLMAAITALFIVIGGMIGG) and 29 to 49 (SGMMLALLFALGMNFFSYWFS). His131 lines the Zn(2+) pocket. Glu132 is an active-site residue. His135 contacts Zn(2+). 2 helical membrane-spanning segments follow: residues 146-166 (ISATMAGAISALANFAVFFGG) and 177-197 (IAGIAVAILAPLAAAMIQMAI). Zn(2+) is bound at residue Glu202.

Belongs to the peptidase M48B family. Requires Zn(2+) as cofactor.

Its subcellular location is the cell inner membrane. The sequence is that of Protease HtpX homolog from Ralstonia pickettii (strain 12J).